Reading from the N-terminus, the 77-residue chain is MAFLKKSLFLVLFLGLVSLSVCEEEKRENEDEEEQEDDEQSEEKRALWKTIIKGAGKMIGSLAKNLLGSQAQPESEQ.

Residues 1 to 22 form the signal peptide; it reads MAFLKKSLFLVLFLGLVSLSVC. 2 propeptides span residues 23–43 and 76–77; these read EEEKRENEDEEEQEDDEQSEE and EQ.

Belongs to the frog skin active peptide (FSAP) family. Dermaseptin subfamily. In terms of tissue distribution, expressed by the skin glands.

It localises to the secreted. Functionally, has antimicrobial activity. Exhibits a bactericidal activity towards several species of mollicutes, firmicutes and gracilicutes. This peptide is membranotropic and it efficiently depolarizes the plasma membrane. The sequence is that of Dermaseptin-B9 (DRG3) from Phyllomedusa bicolor (Two-colored leaf frog).